Consider the following 261-residue polypeptide: Triosephosphate isomerase (261 aa).

A substrate-binding site is contributed by 10 to 12 (NWK). His100 functions as the Electrophile in the catalytic mechanism. Glu172 acts as the Proton acceptor in catalysis. Residues Gly178, Ser218, and 239–240 (GG) each bind substrate.

It belongs to the triosephosphate isomerase family. As to quaternary structure, homodimer.

It is found in the cytoplasm. The enzyme catalyses D-glyceraldehyde 3-phosphate = dihydroxyacetone phosphate. Its pathway is carbohydrate biosynthesis; gluconeogenesis. It functions in the pathway carbohydrate degradation; glycolysis; D-glyceraldehyde 3-phosphate from glycerone phosphate: step 1/1. Involved in the gluconeogenesis. Catalyzes stereospecifically the conversion of dihydroxyacetone phosphate (DHAP) to D-glyceraldehyde-3-phosphate (G3P). This chain is Triosephosphate isomerase, found in Mycobacterium marinum (strain ATCC BAA-535 / M).